The sequence spans 465 residues: Probable glucan endo-1,3-beta-glucosidase eglC (465 aa).

Residues 1-19 (MFTKTQILALALSIASAEA) form the signal peptide. The Proton donor role is filled by glutamate 128. Asparagine 183 carries an N-linked (GlcNAc...) asparagine glycan. The active-site Nucleophile is glutamate 239. The N-linked (GlcNAc...) asparagine glycan is linked to asparagine 318. Low complexity-rich tracts occupy residues 320-333 (SSAS…SAQS) and 380-438 (SPSA…ATPA). Disordered regions lie at residues 320 to 356 (SSAS…GHGG) and 380 to 440 (SPSA…PADF). A lipid anchor (GPI-anchor amidated glycine) is attached at glycine 442. A propeptide spans 443–465 (AGSRLSGSIFGAAMLVAALAVAL) (removed in mature form).

The protein belongs to the glycosyl hydrolase 17 family. The GPI-anchor is attached to the protein in the endoplasmic reticulum and serves to target the protein to the cell surface. There, the glucosamine-inositol phospholipid moiety is cleaved off and the GPI-modified mannoprotein is covalently attached via its lipidless GPI glycan remnant to the 1,6-beta-glucan of the outer cell wall layer.

It is found in the cell membrane. It localises to the secreted. Its subcellular location is the cell wall. It catalyses the reaction Hydrolysis of (1-&gt;3)-beta-D-glucosidic linkages in (1-&gt;3)-beta-D-glucans.. Glucanases play a role in cell expansion during growth, in cell-cell fusion during mating, and in spore release during sporulation. This enzyme may be involved in beta-glucan degradation and also function biosynthetically as a transglycosylase. This Emericella nidulans (strain FGSC A4 / ATCC 38163 / CBS 112.46 / NRRL 194 / M139) (Aspergillus nidulans) protein is Probable glucan endo-1,3-beta-glucosidase eglC (eglC).